Reading from the N-terminus, the 266-residue chain is Vesicle-associated protein 4-1 (266 aa).

The segment at 28 to 57 (STTSSSSTQNPNQNYRSRHGNRNTDISAVS) is disordered. The MSP domain occupies 76–199 (RLRLDPSSYL…VEQVLRVIFI (124 aa)). Positions 200–228 (DADRPSAALEKLKRQLDEAEAAVEARKKP) form a coiled coil. Positions 219-229 (EAAVEARKKPP) are enriched in basic and acidic residues. Residues 219 to 239 (EAAVEARKKPPPETGPRVVGE) form a disordered region. Residue serine 264 is modified to Phosphoserine.

This sequence belongs to the VAMP-associated protein (VAP) (TC 9.B.17) family.

Its function is as follows. May play a role in vesicle trafficking. The protein is Vesicle-associated protein 4-1 (PVA41) of Arabidopsis thaliana (Mouse-ear cress).